A 438-amino-acid chain; its full sequence is V-type ATP synthase beta chain (438 aa).

It belongs to the ATPase alpha/beta chains family.

In terms of biological role, produces ATP from ADP in the presence of a proton gradient across the membrane. The V-type beta chain is a regulatory subunit. The sequence is that of V-type ATP synthase beta chain from Chlamydia abortus (strain DSM 27085 / S26/3) (Chlamydophila abortus).